Here is a 501-residue protein sequence, read N- to C-terminus: Iroquois-class homeodomain protein IRX-3 (501 aa).

The segment at residues F125 to E188 is a DNA-binding region (homeobox; TALE-type). The disordered stretch occupies residues K190–S381. Acidic residues-rich tracts occupy residues R210–E220 and E227–N258. S323 and S326 each carry phosphoserine. The segment covering L324 to A339 has biased composition (pro residues).

The protein belongs to the TALE/IRO homeobox family.

It localises to the nucleus. In terms of biological role, transcription factor involved in SHH-dependent neural patterning. Together with NKX2-2 and NKX6-1 acts to restrict the generation of motor neurons to the appropriate region of the neural tube. Belongs to the class I proteins of neuronal progenitor factors, which are repressed by SHH signals. Involved in the transcriptional repression of MNX1 in non-motor neuron cells. Acts as a regulator of energy metabolism. In Homo sapiens (Human), this protein is Iroquois-class homeodomain protein IRX-3 (IRX3).